The primary structure comprises 172 residues: Protein-export protein SecB (172 aa).

The protein belongs to the SecB family. As to quaternary structure, homotetramer, a dimer of dimers. One homotetramer interacts with 1 SecA dimer.

It localises to the cytoplasm. In terms of biological role, one of the proteins required for the normal export of preproteins out of the cell cytoplasm. It is a molecular chaperone that binds to a subset of precursor proteins, maintaining them in a translocation-competent state. It also specifically binds to its receptor SecA. This Xylella fastidiosa (strain Temecula1 / ATCC 700964) protein is Protein-export protein SecB.